The following is a 101-amino-acid chain: Small ribosomal subunit protein uS14 (101 aa).

It belongs to the universal ribosomal protein uS14 family. In terms of assembly, part of the 30S ribosomal subunit. Contacts proteins S3 and S10.

Its function is as follows. Binds 16S rRNA, required for the assembly of 30S particles and may also be responsible for determining the conformation of the 16S rRNA at the A site. The sequence is that of Small ribosomal subunit protein uS14 from Burkholderia mallei (strain NCTC 10247).